Here is a 343-residue protein sequence, read N- to C-terminus: Protein RecA (343 aa).

ATP is bound at residue 66-73 (GPESSGKT).

Belongs to the RecA family.

The protein localises to the cytoplasm. Functionally, can catalyze the hydrolysis of ATP in the presence of single-stranded DNA, the ATP-dependent uptake of single-stranded DNA by duplex DNA, and the ATP-dependent hybridization of homologous single-stranded DNAs. It interacts with LexA causing its activation and leading to its autocatalytic cleavage. The chain is Protein RecA from Rickettsia bellii (strain OSU 85-389).